Consider the following 478-residue polypeptide: Kynureninase (478 aa).

Pyridoxal 5'-phosphate-binding positions include Leu150, Thr151, 178 to 181 (FPSD), Ser234, Asp263, His266, and Tyr288. The residue at position 289 (Lys289) is an N6-(pyridoxal phosphate)lysine. Residues Trp318 and Asn346 each contribute to the pyridoxal 5'-phosphate site.

Belongs to the kynureninase family. As to quaternary structure, homodimer. Requires pyridoxal 5'-phosphate as cofactor.

It localises to the cytoplasm. The catalysed reaction is L-kynurenine + H2O = anthranilate + L-alanine + H(+). It carries out the reaction 3-hydroxy-L-kynurenine + H2O = 3-hydroxyanthranilate + L-alanine + H(+). It functions in the pathway amino-acid degradation; L-kynurenine degradation; L-alanine and anthranilate from L-kynurenine: step 1/1. It participates in cofactor biosynthesis; NAD(+) biosynthesis; quinolinate from L-kynurenine: step 2/3. Its function is as follows. Catalyzes the cleavage of L-kynurenine (L-Kyn) and L-3-hydroxykynurenine (L-3OHKyn) into anthranilic acid (AA) and 3-hydroxyanthranilic acid (3-OHAA), respectively. This Caenorhabditis elegans protein is Kynureninase.